We begin with the raw amino-acid sequence, 411 residues long: Multifunctional CCA protein (411 aa).

2 residues coordinate ATP: glycine 8 and arginine 11. CTP-binding residues include glycine 8 and arginine 11. The Mg(2+) site is built by glutamate 21 and aspartate 23. ATP contacts are provided by arginine 91, arginine 137, and arginine 140. The CTP site is built by arginine 91, arginine 137, and arginine 140. The 102-residue stretch at 228-329 folds into the HD domain; the sequence is TGVHALLALE…LKTLLALDGL (102 aa).

The protein belongs to the tRNA nucleotidyltransferase/poly(A) polymerase family. Bacterial CCA-adding enzyme type 1 subfamily. As to quaternary structure, monomer. Can also form homodimers and oligomers. Mg(2+) serves as cofactor. Requires Ni(2+) as cofactor.

The enzyme catalyses a tRNA precursor + 2 CTP + ATP = a tRNA with a 3' CCA end + 3 diphosphate. It carries out the reaction a tRNA with a 3' CCA end + 2 CTP + ATP = a tRNA with a 3' CCACCA end + 3 diphosphate. In terms of biological role, catalyzes the addition and repair of the essential 3'-terminal CCA sequence in tRNAs without using a nucleic acid template. Adds these three nucleotides in the order of C, C, and A to the tRNA nucleotide-73, using CTP and ATP as substrates and producing inorganic pyrophosphate. tRNA 3'-terminal CCA addition is required both for tRNA processing and repair. Also involved in tRNA surveillance by mediating tandem CCA addition to generate a CCACCA at the 3' terminus of unstable tRNAs. While stable tRNAs receive only 3'-terminal CCA, unstable tRNAs are marked with CCACCA and rapidly degraded. This is Multifunctional CCA protein from Teredinibacter turnerae (strain ATCC 39867 / T7901).